Here is a 115-residue protein sequence, read N- to C-terminus: Large ribosomal subunit protein uL22 (115 aa).

It belongs to the universal ribosomal protein uL22 family. As to quaternary structure, part of the 50S ribosomal subunit.

This protein binds specifically to 23S rRNA; its binding is stimulated by other ribosomal proteins, e.g. L4, L17, and L20. It is important during the early stages of 50S assembly. It makes multiple contacts with different domains of the 23S rRNA in the assembled 50S subunit and ribosome. In terms of biological role, the globular domain of the protein is located near the polypeptide exit tunnel on the outside of the subunit, while an extended beta-hairpin is found that lines the wall of the exit tunnel in the center of the 70S ribosome. The chain is Large ribosomal subunit protein uL22 from Lactococcus lactis subsp. lactis (strain IL1403) (Streptococcus lactis).